The chain runs to 243 residues: Small ribosomal subunit protein mS23 (243 aa).

This sequence belongs to the mitochondrion-specific ribosomal protein mS23 family. As to quaternary structure, component of the mitochondrial small ribosomal subunit.

The protein localises to the mitochondrion. This is Small ribosomal subunit protein mS23 (rsm25) from Emericella nidulans (strain FGSC A4 / ATCC 38163 / CBS 112.46 / NRRL 194 / M139) (Aspergillus nidulans).